The chain runs to 1170 residues: Thrombospondin-2 (1170 aa).

The first 18 residues, 1–18 (MLWPLLLLALWAWPSAQA), serve as a signal peptide directing secretion. A Laminin G-like domain is found at 19–215 (GDQDEDTAFD…LQNVYLVFEN (197 aa)). Residues 19 to 232 (GDQDEDTAFD…KKGCQQSQGA (214 aa)) are heparin-binding. 3 N-linked (GlcNAc...) asparagine glycosylation sites follow: Asn151, Asn316, and Asn330. The 58-residue stretch at 318 to 375 (SACWQDGRFFAENETWVVDSCTKCTCKKFKTVCHQISCPPATCADPWFVEGECCPSCV) folds into the VWFC domain. TSP type-1 domains lie at 379 to 429 (EEGW…GRCD), 435 to 490 (DGGW…PPCP), and 492 to 547 (DGRW…KSCP). 26 disulfides stabilise this stretch: Cys391–Cys423, Cys395–Cys428, Cys406–Cys413, Cys447–Cys484, Cys451–Cys489, Cys462–Cys474, Cys504–Cys541, Cys508–Cys546, Cys519–Cys531, Cys551–Cys562, Cys556–Cys572, Cys575–Cys586, Cys592–Cys608, Cys599–Cys617, Cys620–Cys644, Cys650–Cys663, Cys657–Cys676, Cys678–Cys689, Cys705–Cys713, Cys718–Cys738, Cys754–Cys774, Cys777–Cys797, Cys813–Cys833, Cys836–Cys856, Cys874–Cys894, and Cys910–Cys930. N-linked (GlcNAc...) asparagine glycosylation occurs at Asn455. The 41-residue stretch at 547–587 (PIDGCLSNPCFPGAECSSFPDGSWSCGSCPGGFLGNGTHCE) folds into the EGF-like 1 domain. Residue Asn582 is glycosylated (N-linked (GlcNAc...) asparagine). One can recognise an EGF-like 2 domain in the interval 646 to 690 (PENPCKDKTHSCHRHAECIYLGHFSDPMYKCECQTGYAGDGLICG). 8 TSP type-3 repeats span residues 691 to 726 (EDSD…NSGQ), 727 to 762 (EDFD…NPRQ), 763 to 785 (FDYD…NPAQ), 786 to 821 (IDTD…NTDQ), 822 to 844 (RDTD…NPDQ), 845 to 882 (TDVD…NANQ), 883 to 918 (ADHD…NPDQ), and 919 to 954 (EDSD…AISE). An N-linked (GlcNAc...) asparagine glycan is attached at Asn708. Positions 731-750 (KDGIGDACDDDDDNDGVSDE) are disordered. Acidic residues predominate over residues 737–747 (ACDDDDDNDGV). Positions 841–944 (NPDQTDVDND…DNDSIPDIDD (104 aa)) are disordered. Composition is skewed to acidic residues over residues 845–864 (TDVD…DIDE) and 894–903 (CDSDDDNDGI). The segment covering 923 to 933 (GDRRGDACKDD) has biased composition (basic and acidic residues). Residues 926 to 928 (RGD) carry the Cell attachment site motif. The segment covering 934-944 (FDNDSIPDIDD) has biased composition (acidic residues). N-linked (GlcNAc...) asparagine glycosylation is found at Asn936 and Asn1067. A disulfide bond links Cys946 and Cys1167. The TSP C-terminal domain maps to 958–1170 (RNFQMVHLDP…SDLKYECRDV (213 aa)).

Belongs to the thrombospondin family. As to quaternary structure, homotrimer; disulfide-linked. Can bind to fibrinogen, fibronectin, laminin and type V collagen. Interacts (via the TSP type I repeats) with CD36; the interaction conveys an antiangiogenic effect. Interacts (via the TSP type I repeats) with HRG; the interaction blocks the antiangiogenic effect of THBS2 with CD36.

Its function is as follows. Adhesive glycoprotein that mediates cell-to-cell and cell-to-matrix interactions. Ligand for CD36 mediating antiangiogenic properties. The sequence is that of Thrombospondin-2 (THBS2) from Bos taurus (Bovine).